The sequence spans 380 residues: Alanine racemase (380 aa).

Lysine 34 serves as the catalytic Proton acceptor; specific for D-alanine. Lysine 34 carries the post-translational modification N6-(pyridoxal phosphate)lysine. Arginine 135 lines the substrate pocket. Tyrosine 267 serves as the catalytic Proton acceptor; specific for L-alanine. Methionine 315 is a substrate binding site.

Belongs to the alanine racemase family. Pyridoxal 5'-phosphate is required as a cofactor.

The catalysed reaction is L-alanine = D-alanine. It functions in the pathway amino-acid biosynthesis; D-alanine biosynthesis; D-alanine from L-alanine: step 1/1. Catalyzes the interconversion of L-alanine and D-alanine. May also act on other amino acids. The polypeptide is Alanine racemase (alr) (Lawsonia intracellularis (strain PHE/MN1-00)).